The following is a 648-amino-acid chain: Chaperone protein HtpG (648 aa).

Residues Met-1–Arg-349 are a; substrate-binding. Residues Glu-350–Arg-570 are b. A c region spans residues Ile-571–Asp-648.

Belongs to the heat shock protein 90 family. In terms of assembly, homodimer.

Its subcellular location is the cytoplasm. Functionally, molecular chaperone. Has ATPase activity. The protein is Chaperone protein HtpG of Aromatoleum aromaticum (strain DSM 19018 / LMG 30748 / EbN1) (Azoarcus sp. (strain EbN1)).